Reading from the N-terminus, the 451-residue chain is Nicotinamide phosphoribosyltransferase (451 aa).

Arg209 lines the diphosphate pocket. Asp232 contacts beta-nicotinamide D-ribonucleotide. The diphosphate site is built by His248 and Arg309. Residues 309–311 (RPD), 364–365 (GD), and Arg403 each bind beta-nicotinamide D-ribonucleotide.

This sequence belongs to the NAPRTase family.

It carries out the reaction beta-nicotinamide D-ribonucleotide + diphosphate = 5-phospho-alpha-D-ribose 1-diphosphate + nicotinamide + H(+). The protein operates within cofactor biosynthesis; NAD(+) biosynthesis; nicotinamide D-ribonucleotide from 5-phospho-alpha-D-ribose 1-diphosphate and nicotinamide: step 1/1. Its function is as follows. Catalyzes the condensation of nicotinamide with 5-phosphoribosyl-1-pyrophosphate to yield nicotinamide mononucleotide, an intermediate in the biosynthesis of NAD. The chain is Nicotinamide phosphoribosyltransferase from Mycoplasma pneumoniae (strain ATCC 29342 / M129 / Subtype 1) (Mycoplasmoides pneumoniae).